The following is a 96-amino-acid chain: UPF0235 protein ECA3630 (96 aa).

The protein belongs to the UPF0235 family.

This is UPF0235 protein ECA3630 from Pectobacterium atrosepticum (strain SCRI 1043 / ATCC BAA-672) (Erwinia carotovora subsp. atroseptica).